The following is a 37-amino-acid chain: Large ribosomal subunit protein bL36B (37 aa).

The protein belongs to the bacterial ribosomal protein bL36 family.

This Saccharopolyspora erythraea (strain ATCC 11635 / DSM 40517 / JCM 4748 / NBRC 13426 / NCIMB 8594 / NRRL 2338) protein is Large ribosomal subunit protein bL36B.